We begin with the raw amino-acid sequence, 391 residues long: MKESIFSKKRILLLGSGELGKELVIESKRLGLEVIAIDRYEKAPAMQVADYSRVIDMGDKNILKNVIKEFNPDYVVPEIEALSIEALKELEDEGFNIVPNARTVEITMNRDKIRDLASKDLKIKTAKFDYIFEFDDLEKKADEIGFPLLLKPLMSSSGKGQSLVETKNDLQNAWKQAQANSRGKVKGVIIEEFINFDFEFTLLTVRKENGENIFCLPIGHLQSNGDYQCSWQPLEIKDSLIIEAKRMTSRILNNLNGAGLYGVEFFIKGSEVIFSELSPRPHDTGMVTLVSQNINEFELHLRAFLDLPIPHIYLIEPSATRVILSNQEYLNPIYEGLNEALEFEKTKVLIFGKPVSRKGRRMGVVLSSNSDIYLARKNADEAARKIKVSTT.

Residues 18 to 19 (EL) and E78 contribute to the N(1)-(5-phospho-beta-D-ribosyl)glycinamide site. ATP contacts are provided by residues R110, K151, 156-161 (SSGKGQ), 191-194 (EEFI), and E199. Residues 115-305 (DLASKDLKIK…EFELHLRAFL (191 aa)) enclose the ATP-grasp domain. E264 and E276 together coordinate Mg(2+). Residues D283, K353, and 360-361 (RR) each bind N(1)-(5-phospho-beta-D-ribosyl)glycinamide.

This sequence belongs to the PurK/PurT family. As to quaternary structure, homodimer.

It catalyses the reaction N(1)-(5-phospho-beta-D-ribosyl)glycinamide + formate + ATP = N(2)-formyl-N(1)-(5-phospho-beta-D-ribosyl)glycinamide + ADP + phosphate + H(+). It participates in purine metabolism; IMP biosynthesis via de novo pathway; N(2)-formyl-N(1)-(5-phospho-D-ribosyl)glycinamide from N(1)-(5-phospho-D-ribosyl)glycinamide (formate route): step 1/1. Involved in the de novo purine biosynthesis. Catalyzes the transfer of formate to 5-phospho-ribosyl-glycinamide (GAR), producing 5-phospho-ribosyl-N-formylglycinamide (FGAR). Formate is provided by PurU via hydrolysis of 10-formyl-tetrahydrofolate. The chain is Formate-dependent phosphoribosylglycinamide formyltransferase from Prochlorococcus marinus (strain MIT 9301).